A 54-amino-acid chain; its full sequence is Large ribosomal subunit protein bL33A (54 aa).

The protein belongs to the bacterial ribosomal protein bL33 family.

This Saccharopolyspora erythraea (strain ATCC 11635 / DSM 40517 / JCM 4748 / NBRC 13426 / NCIMB 8594 / NRRL 2338) protein is Large ribosomal subunit protein bL33A.